The primary structure comprises 330 residues: L-tryptophan isonitrile synthase AmbI2 (330 aa).

The protein belongs to the isocyanide synthase family.

The enzyme catalyses D-ribulose 5-phosphate + L-tryptophan = (2S)-3-(1H-indol-3-yl)-2-isocyanopropanoate + hydroxyacetone + formaldehyde + phosphate + H2O + H(+). Its function is as follows. Involved in the biosynthesis of ambiguines, a family of hapalindole-type alkaloids. Responsible for the synthesis of the isonitrile group on tryptophan using ribulose 5-phosphate as the source of the carbon atom. This chain is L-tryptophan isonitrile synthase AmbI2, found in Fischerella ambigua (strain UTEX 1903).